We begin with the raw amino-acid sequence, 157 residues long: Transcriptional repressor NrdR (157 aa).

Residues 3-34 (CPHCHQNSSRVIDSRPTDEGRVIRRRRECENC) fold into a zinc finger. Residues 49–139 (LLVIKKNGTR…VYRQFKDMNV (91 aa)) enclose the ATP-cone domain.

Belongs to the NrdR family. It depends on Zn(2+) as a cofactor.

Negatively regulates transcription of bacterial ribonucleotide reductase nrd genes and operons by binding to NrdR-boxes. This Latilactobacillus sakei subsp. sakei (strain 23K) (Lactobacillus sakei subsp. sakei) protein is Transcriptional repressor NrdR.